A 296-amino-acid polypeptide reads, in one-letter code: NADH-cytochrome b5 reductase 2 (296 aa).

Residues 2 to 24 form a helical membrane-spanning segment; it reads LVALAAIGVTVLLFLIKALGSGA. Residues 35-147 form the FAD-binding FR-type domain; it reads NAKYPLPLIE…RGPNGLLVYK (113 aa). FAD is bound by residues 127–142 and 166–201; these read DSLKIGETIDFRGPNG and VAKHVGMLAGGTGITPMLQLIRQITQDPNDNTKCYL.

The protein belongs to the flavoprotein pyridine nucleotide cytochrome reductase family. The cofactor is FAD.

Its subcellular location is the membrane. The catalysed reaction is 2 Fe(III)-[cytochrome b5] + NADH = 2 Fe(II)-[cytochrome b5] + NAD(+) + H(+). Functionally, NADH-cytochrome b5 reductases are involved in desaturation and elongation of fatty acids, cholesterol biosynthesis and drug metabolism. This is NADH-cytochrome b5 reductase 2 (cyb5r2) from Xenopus laevis (African clawed frog).